A 135-amino-acid polypeptide reads, in one-letter code: Cytochrome c2 (135 aa).

The first 23 residues, 1 to 23, serve as a signal peptide directing secretion; it reads MKKGFLAAGVFAAVAFASGAALA. Heme c-binding residues include Cys37, Cys40, His41, and Met114.

The protein belongs to the cytochrome c family. In terms of processing, binds 1 heme c group covalently per subunit.

Cytochrome c2 is found mainly in purple, non-sulfur, photosynthetic bacteria where it functions as the electron donor to the oxidized bacteriochlorophyll in the photophosphorylation pathway. However, it may also have a role in the respiratory chain and is found in some non-photosynthetic bacteria. This chain is Cytochrome c2 (cycA), found in Rhodospirillum rubrum (strain ATCC 11170 / ATH 1.1.1 / DSM 467 / LMG 4362 / NCIMB 8255 / S1).